The following is a 470-amino-acid chain: 3-oxo-isoapionate kinase (470 aa).

Substrate is bound by residues Asp30 and Arg78. ATP is bound by residues Ser291, 403 to 406 (GGDS), and Gly451.

It belongs to the four-carbon acid sugar kinase family.

It catalyses the reaction 3-oxoisoapionate + ATP = 3-oxoisoapionate 4-phosphate + ADP + H(+). It participates in carbohydrate metabolism. Involved in catabolism of D-apiose. Catalyzes the phosphorylation of 3-oxo-isoapionate to 3-oxo-isoapionate 4-phosphate. In Paraburkholderia graminis (strain ATCC 700544 / DSM 17151 / LMG 18924 / NCIMB 13744 / C4D1M), this protein is 3-oxo-isoapionate kinase.